Here is a 381-residue protein sequence, read N- to C-terminus: Protein YkfC (381 aa).

Residues 72–337 (LRDELLSGHY…DGFIFLGHRL (266 aa)) enclose the Reverse transcriptase domain. D166, D284, and D285 together coordinate Mg(2+).

It belongs to the bacterial reverse transcriptase family.

The protein is Protein YkfC (ykfC) of Escherichia coli (strain K12).